Here is a 413-residue protein sequence, read N- to C-terminus: Gamma-glutamyl phosphate reductase (413 aa).

This sequence belongs to the gamma-glutamyl phosphate reductase family.

Its subcellular location is the cytoplasm. It carries out the reaction L-glutamate 5-semialdehyde + phosphate + NADP(+) = L-glutamyl 5-phosphate + NADPH + H(+). The protein operates within amino-acid biosynthesis; L-proline biosynthesis; L-glutamate 5-semialdehyde from L-glutamate: step 2/2. In terms of biological role, catalyzes the NADPH-dependent reduction of L-glutamate 5-phosphate into L-glutamate 5-semialdehyde and phosphate. The product spontaneously undergoes cyclization to form 1-pyrroline-5-carboxylate. This Alkaliphilus oremlandii (strain OhILAs) (Clostridium oremlandii (strain OhILAs)) protein is Gamma-glutamyl phosphate reductase.